A 261-amino-acid polypeptide reads, in one-letter code: MSTTRCQVVGFLLSILGLAGCIVATEMDMWSTQDLYDNPVTAVFQYEGLWRSCVQQSSGFTECRPYLTILGLPAMLQAVRALMIVGIVLSVIGLLVAIFALKCIRMGNMDDSAKAKMTLTSGIMFIIAGLCAIAGVSVFANMLVTNFWMSTASMFTSMGGMVQTVQTRYTFGAALFVGWVAGGLTLIGGVLMCIACRGLAPEETNYKAVSYHASGHNVAYRPGGFKASSGFESNTRNKKIYDGGARTEDEGQSPPSKYDYV.

Over 1–6 (MSTTRC) the chain is Cytoplasmic. The chain crosses the membrane as a helical span at residues 7–27 (QVVGFLLSILGLAGCIVATEM). The Extracellular portion of the chain corresponds to 28–80 (DMWSTQDLYDNPVTAVFQYEGLWRSCVQQSSGFTECRPYLTILGLPAMLQAVR). A helical membrane pass occupies residues 81–101 (ALMIVGIVLSVIGLLVAIFAL). Residues 102-122 (KCIRMGNMDDSAKAKMTLTSG) lie on the Cytoplasmic side of the membrane. The helical transmembrane segment at 123-143 (IMFIIAGLCAIAGVSVFANML) threads the bilayer. The Extracellular portion of the chain corresponds to 144–174 (VTNFWMSTASMFTSMGGMVQTVQTRYTFGAA). A helical transmembrane segment spans residues 175–195 (LFVGWVAGGLTLIGGVLMCIA). Residues 195 to 261 (ACRGLAPEET…QSPPSKYDYV (67 aa)) are required for role in regulation of RANKL-induced osteoclast differentiation. The Cytoplasmic segment spans residues 196–261 (CRGLAPEETN…QSPPSKYDYV (66 aa)). Ser214 carries the phosphoserine modification. The tract at residues 228-261 (SSGFESNTRNKKIYDGGARTEDEGQSPPSKYDYV) is disordered. A compositionally biased stretch (basic and acidic residues) spans 239-249 (KIYDGGARTED).

It belongs to the claudin family. In terms of assembly, interacts with TJP2/ZO-2. Interacts with TJP1/ZO-1. Interacts with YAP1 (phosphorylated); the interaction sequesters YAP1 away from the nucleus and thereby restricts transcription of YAP1 target genes. Interacts with CLDN19.

The protein localises to the cell junction. It localises to the tight junction. It is found in the cell membrane. Functionally, involved in alveolar fluid homeostasis via regulation of alveolar epithelial tight junction composition and therefore ion transport and solute permeability, potentially via downstream regulation of the actin cytoskeleton organization and beta-2-adrenergic signaling. Required for lung alveolarization and maintenance of the paracellular alveolar epithelial barrier. Acts to maintain epithelial progenitor cell proliferation and organ size, via regulation of YAP1 localization away from the nucleus and thereby restriction of YAP1 target gene transcription. Acts as a negative regulator of RANKL-induced osteoclast differentiation, potentially via relocation of TJP2/ZO-2 away from the nucleus, subsequently involved in bone resorption in response to calcium deficiency. Mediates the osteoprotective effects of estrogen, potentially via acting downstream of estrogen signaling independently of RANKL signaling pathways. The chain is Claudin-18 (CLDN18) from Bos taurus (Bovine).